The sequence spans 565 residues: Coiled-coil domain-containing protein 17 (565 aa).

The interval 58 to 87 is disordered; sequence IMAQEKSRDQEASTSALKRLTEETAGSPGE. Coiled-coil stretches lie at residues 97 to 160 and 219 to 271; these read ARRM…TLGA and LQLQ…KVLS.

In Mus musculus (Mouse), this protein is Coiled-coil domain-containing protein 17 (Ccdc17).